Here is a 94-residue protein sequence, read N- to C-terminus: RING finger protein Z (94 aa).

A disordered region spans residues methionine 1 to serine 22. The N-myristoyl glycine; by host moiety is linked to residue glycine 2. An RING-type; atypical zinc finger spans residues cysteine 39–cysteine 75. Residues proline 89–proline 92 carry the PTAP/PSAP motif motif.

This sequence belongs to the arenaviridae Z protein family. In terms of assembly, interacts with protein NP; this interaction probably directs the encapsidated genome to budding sites. Interacts (via RING domain) with polymerase L; this interaction inhibits viral transcription and replication, Z partially blocks the product exit tunnel for the releasing nascent RNA product. Interacts with the glycoprotein complex; this interaction plays a role in virion budding. Interacts with host eIF4E; this interaction results in eIF4E reduced affinity for its substrate, the 5'-m7 G cap structure. Interacts (via late-budding domain) with host TSG101; this interaction is essential for budding and release of viral particles. Interacts with host RPLP0; this interaction may serve to load ribosome-like particles inside the virion. Interacts with host PML; this interaction induces PML bodies redistribution in the cytoplasm upon viral infection. In terms of processing, myristoylation is required for the role of RING finger protein Z in assembly and budding.

Its subcellular location is the virion. It is found in the host cytoplasm. The protein resides in the host perinuclear region. The protein localises to the host cell membrane. In terms of biological role, plays a crucial role in virion assembly and budding. Expressed late in the virus life cycle, it acts as an inhibitor of viral transcription and RNA synthesis by interacting with the viral polymerase L. Presumably recruits the NP encapsidated genome to cellular membranes at budding sites via direct interaction with NP. Plays critical roles in the final steps of viral release by interacting with host TSG101, a member of the vacuolar protein-sorting pathway and using other cellular host proteins involved in vesicle formation pathway. The budding of the virus progeny occurs after association of protein Z with the viral glycoprotein complex SSP-GP1-GP2 at the cell periphery, step that requires myristoylation of protein Z. Also selectively represses protein production by associating with host eIF4E. In cell-based minigenome assay, has an inhibitory effect on the ribonucleoprotein machinery (vRNP), which is responsible for the replication and transcription of the viral genome. The chain is RING finger protein Z from Calomys callosus (Large vesper mouse).